We begin with the raw amino-acid sequence, 173 residues long: Putative MgpC-like protein MPN_092 (173 aa).

This sequence belongs to the MgpC family.

This chain is Putative MgpC-like protein MPN_092, found in Mycoplasma pneumoniae (strain ATCC 29342 / M129 / Subtype 1) (Mycoplasmoides pneumoniae).